The following is a 137-amino-acid chain: Peptide methionine sulfoxide reductase MsrB (137 aa).

In terms of domain architecture, MsrB spans 7–129; it reads AEELKKKLSE…NSASLAFSDE (123 aa). Residues cysteine 46, cysteine 49, cysteine 95, and cysteine 98 each contribute to the Zn(2+) site. Cysteine 118 (nucleophile) is an active-site residue.

This sequence belongs to the MsrB Met sulfoxide reductase family. Zn(2+) is required as a cofactor.

It carries out the reaction L-methionyl-[protein] + [thioredoxin]-disulfide + H2O = L-methionyl-(R)-S-oxide-[protein] + [thioredoxin]-dithiol. In Salmonella arizonae (strain ATCC BAA-731 / CDC346-86 / RSK2980), this protein is Peptide methionine sulfoxide reductase MsrB.